The primary structure comprises 1058 residues: Carbamoyl phosphate synthase large chain (1058 aa).

The segment at 1 to 401 is carboxyphosphate synthetic domain; sequence MPKRTDIQKI…SLLKACRSLE (401 aa). Positions 129, 169, 175, 176, 208, 210, 215, 241, 242, 243, 284, and 298 each coordinate ATP. Residues 133-327 enclose the ATP-grasp 1 domain; that stretch reads KQLMEELEQP…IAKLAAKIAV (195 aa). Q284, E298, and N300 together coordinate Mg(2+). The Mn(2+) site is built by Q284, E298, and N300. An oligomerization domain region spans residues 402-546; it reads IGVHHNEIPE…YSTYGWENES (145 aa). The tract at residues 547–929 is carbamoyl phosphate synthetic domain; sequence IKSDKESVLV…ALYKAFEASY (383 aa). The 191-residue stretch at 671–861 folds into the ATP-grasp 2 domain; sequence EQALKELDIP…MAQVATKLIL (191 aa). ATP-binding residues include R707, S746, I748, E752, G777, V778, H779, S780, Q820, and E832. Mg(2+)-binding residues include Q820, E832, and N834. Residues Q820, E832, and N834 each coordinate Mn(2+). The MGS-like domain occupies 930–1058; it reads LHLPTFGNVV…ESRSFVTEAI (129 aa). Residues 930–1058 are allosteric domain; it reads LHLPTFGNVV…ESRSFVTEAI (129 aa).

The protein belongs to the CarB family. As to quaternary structure, composed of two chains; the small (or glutamine) chain promotes the hydrolysis of glutamine to ammonia, which is used by the large (or ammonia) chain to synthesize carbamoyl phosphate. Tetramer of heterodimers (alpha,beta)4. Requires Mg(2+) as cofactor. The cofactor is Mn(2+).

The enzyme catalyses hydrogencarbonate + L-glutamine + 2 ATP + H2O = carbamoyl phosphate + L-glutamate + 2 ADP + phosphate + 2 H(+). It catalyses the reaction hydrogencarbonate + NH4(+) + 2 ATP = carbamoyl phosphate + 2 ADP + phosphate + 2 H(+). The protein operates within amino-acid biosynthesis; L-arginine biosynthesis; carbamoyl phosphate from bicarbonate: step 1/1. It participates in pyrimidine metabolism; UMP biosynthesis via de novo pathway; (S)-dihydroorotate from bicarbonate: step 1/3. Its function is as follows. Large subunit of the glutamine-dependent carbamoyl phosphate synthetase (CPSase). CPSase catalyzes the formation of carbamoyl phosphate from the ammonia moiety of glutamine, carbonate, and phosphate donated by ATP, constituting the first step of 2 biosynthetic pathways, one leading to arginine and/or urea and the other to pyrimidine nucleotides. The large subunit (synthetase) binds the substrates ammonia (free or transferred from glutamine from the small subunit), hydrogencarbonate and ATP and carries out an ATP-coupled ligase reaction, activating hydrogencarbonate by forming carboxy phosphate which reacts with ammonia to form carbamoyl phosphate. This Streptococcus pneumoniae (strain ATCC 700669 / Spain 23F-1) protein is Carbamoyl phosphate synthase large chain.